We begin with the raw amino-acid sequence, 123 residues long: Histone H2B (123 aa).

The segment at 1–32 (MPPKAASKGAKKAASKAKAARSTDKKKRRRRR) is disordered. Positions 9-32 (GAKKAASKAKAARSTDKKKRRRRR) are enriched in basic residues. O-linked (GlcNAc) serine glycosylation occurs at S110. A Glycyl lysine isopeptide (Lys-Gly) (interchain with G-Cter in ubiquitin) cross-link involves residue K118.

The protein belongs to the histone H2B family. In terms of assembly, the nucleosome is a histone octamer containing two molecules each of H2A, H2B, H3 and H4 assembled in one H3-H4 heterotetramer and two H2A-H2B heterodimers. The octamer wraps approximately 147 bp of DNA. Post-translationally, monoubiquitination of Lys-118 gives a specific tag for epigenetic transcriptional activation and is also prerequisite for histone H3 'Lys-4' and 'Lys-79' methylation.

It localises to the nucleus. It is found in the chromosome. Core component of nucleosome. Nucleosomes wrap and compact DNA into chromatin, limiting DNA accessibility to the cellular machineries which require DNA as a template. Histones thereby play a central role in transcription regulation, DNA repair, DNA replication and chromosomal stability. DNA accessibility is regulated via a complex set of post-translational modifications of histones, also called histone code, and nucleosome remodeling. The polypeptide is Histone H2B (Urechis caupo (Innkeeper worm)).